A 479-amino-acid chain; its full sequence is Aspartyl/glutamyl-tRNA(Asn/Gln) amidotransferase subunit B (479 aa).

The protein belongs to the GatB/GatE family. GatB subfamily. In terms of assembly, heterotrimer of A, B and C subunits.

It catalyses the reaction L-glutamyl-tRNA(Gln) + L-glutamine + ATP + H2O = L-glutaminyl-tRNA(Gln) + L-glutamate + ADP + phosphate + H(+). The enzyme catalyses L-aspartyl-tRNA(Asn) + L-glutamine + ATP + H2O = L-asparaginyl-tRNA(Asn) + L-glutamate + ADP + phosphate + 2 H(+). Its function is as follows. Allows the formation of correctly charged Asn-tRNA(Asn) or Gln-tRNA(Gln) through the transamidation of misacylated Asp-tRNA(Asn) or Glu-tRNA(Gln) in organisms which lack either or both of asparaginyl-tRNA or glutaminyl-tRNA synthetases. The reaction takes place in the presence of glutamine and ATP through an activated phospho-Asp-tRNA(Asn) or phospho-Glu-tRNA(Gln). In Clostridium beijerinckii (strain ATCC 51743 / NCIMB 8052) (Clostridium acetobutylicum), this protein is Aspartyl/glutamyl-tRNA(Asn/Gln) amidotransferase subunit B.